Here is a 218-residue protein sequence, read N- to C-terminus: MDIDNSILIRVVLLGDYCVGKTTTGFVFDGKQFDFSRNCNIGVDFFVKHIVVDNQCVRLQVWDTGGQERFKTITRSYFRNTSCCLLFFSVDDQKSFENIDMWYSLAFEKYDLLNYPVVLVGNKIDLPQEKHVITKKMAEEWCKNQQTKLNLKFSIPYFETSAKNNININEIFYSAAELGLKNIVFKNNNNNNNYNNNNKLNGNKEIQNEKNKGMCFIL.

Glycine 15 to threonine 22 provides a ligand contact to GTP. The short motif at arginine 37–phenylalanine 45 is the Effector region element. Residues aspartate 63–glutamine 67 and asparagine 122–aspartate 125 each bind GTP. The residue at position 215 (cysteine 215) is a Cysteine methyl ester. Cysteine 215 carries the S-geranylgeranyl cysteine lipid modification. Residues phenylalanine 216 to leucine 218 constitute a propeptide, removed in mature form.

This sequence belongs to the small GTPase superfamily. Rab family.

The protein localises to the cell membrane. This is Ras-related protein RabO (rabO) from Dictyostelium discoideum (Social amoeba).